A 423-amino-acid chain; its full sequence is N-acylneuraminate cytidylyltransferase B (423 aa).

6 residues coordinate substrate: Arg30, Asn40, Arg88, Ser97, Ser99, and Gln120. Arg178 is an active-site residue.

Belongs to the CMP-NeuNAc synthase family. In terms of assembly, homotetramer.

The protein localises to the cytoplasm. It catalyses the reaction an N-acylneuraminate + CTP = a CMP-N-acyl-beta-neuraminate + diphosphate. Its pathway is amino-sugar metabolism; N-acetylneuraminate metabolism. Catalyzes the activation of 2-keto-3-deoxy-D-glycero-D-galacto-nononic acid (KDN) to cytidine 5'-monophosphate 2-keto-3-deoxy-D-glycero-D-galacto-nononic acid (CMP-KDN), a substrate required for the addition of sialic acid. Also has weak activity towards N-acetylneuraminic acid (NeuNAc) and N-glycolylneuraminic acid (Neu5Gc). The chain is N-acylneuraminate cytidylyltransferase B from Danio rerio (Zebrafish).